The primary structure comprises 246 residues: 3-deoxy-manno-octulosonate cytidylyltransferase (246 aa).

The protein belongs to the KdsB family.

The protein localises to the cytoplasm. It catalyses the reaction 3-deoxy-alpha-D-manno-oct-2-ulosonate + CTP = CMP-3-deoxy-beta-D-manno-octulosonate + diphosphate. It functions in the pathway nucleotide-sugar biosynthesis; CMP-3-deoxy-D-manno-octulosonate biosynthesis; CMP-3-deoxy-D-manno-octulosonate from 3-deoxy-D-manno-octulosonate and CTP: step 1/1. Its pathway is bacterial outer membrane biogenesis; lipopolysaccharide biosynthesis. Its function is as follows. Activates KDO (a required 8-carbon sugar) for incorporation into bacterial lipopolysaccharide in Gram-negative bacteria. The protein is 3-deoxy-manno-octulosonate cytidylyltransferase of Rickettsia peacockii (strain Rustic).